A 358-amino-acid polypeptide reads, in one-letter code: MFDSVTGLIAEHDDLQQQLSDPELHSDPVRSKKVNRRYAELSRIVAAYTEWKQLTDDLEAARELAAEDDAFAAEIPGLEQGLEESEEKLRRLLIPRDPNDSRDAIMEIKMGEGGAESALFAGDLLSMYLHYADSRRWKAEIIEQTSSDLGGIKDVQVAFKGSSSDPAEGVWAHLKYEGGVHRVQRVPATESQGRIHTSAAGVLVFPEVDEPEEVEINPNDLKIDVFRSSGPGGQSVNTTDSAVRITHAPTGIVVSMQNEKSQLQNREAAMRVLRARLLAKQQEEADAEAAEFRKGQIRTMERSERIRTYNFPENRIADHRTGYKAYNLDAVMNGALGPVIESCILADEETRLANLSTD.

Gln-234 is subject to N5-methylglutamine.

Belongs to the prokaryotic/mitochondrial release factor family. Post-translationally, methylated by PrmC. Methylation increases the termination efficiency of RF1.

The protein localises to the cytoplasm. Its function is as follows. Peptide chain release factor 1 directs the termination of translation in response to the peptide chain termination codons UAG and UAA. This is Peptide chain release factor 1 from Leifsonia xyli subsp. xyli (strain CTCB07).